Here is a 140-residue protein sequence, read N- to C-terminus: ATP synthase epsilon chain (140 aa).

This sequence belongs to the ATPase epsilon chain family. As to quaternary structure, F-type ATPases have 2 components, CF(1) - the catalytic core - and CF(0) - the membrane proton channel. CF(1) has five subunits: alpha(3), beta(3), gamma(1), delta(1), epsilon(1). CF(0) has three main subunits: a, b and c.

Its subcellular location is the cell inner membrane. Functionally, produces ATP from ADP in the presence of a proton gradient across the membrane. The chain is ATP synthase epsilon chain from Vibrio parahaemolyticus serotype O3:K6 (strain RIMD 2210633).